Consider the following 662-residue polypeptide: Chaperone protein dnaK1 (662 aa).

A Phosphothreonine; by autocatalysis modification is found at Thr-198. The tract at residues 630–662 (DWDDDPWAAPSGPPRGRSLNRRDRDPWDDDFYR) is disordered. Residues 649–662 (NRRDRDPWDDDFYR) are compositionally biased toward basic and acidic residues.

Belongs to the heat shock protein 70 family.

Functionally, acts as a chaperone. The chain is Chaperone protein dnaK1 (dnaK1) from Parasynechococcus marenigrum (strain WH8102).